Consider the following 1030-residue polypeptide: Tricorn protease (1030 aa).

The six-bladed beta propeller stretch occupies residues 1 to 270; sequence MANLLQNPDI…DNVKSLDIGP (270 aa). The tract at residues 93 to 94 is binds the substrate's C-terminus; sequence RR. The interval 286-635 is seven-bladed beta propeller; that stretch reads LEDFSMSPGD…EEEKSLNIDA (350 aa). The segment at 641–712 is C-1; sequence NVKEDFAEMY…RTSHSYEMGG (72 aa). The active-site Charge relay system is the H706. The interval 721–816 is PDZ-like; it reads RAGRIACDFK…SGFVDVLQDD (96 aa). Residues 817 to 1022 are C-2; the sequence is RYIRYRAWVE…IEMVLADLEK (206 aa). 877–879 is a substrate binding site; sequence GGG. Catalysis depends on S926, which acts as the Nucleophile. 954–956 provides a ligand contact to substrate; that stretch reads GIS. E984 serves as the catalytic Charge relay system.

This sequence belongs to the peptidase S41B family. Part of the tricorn proteolytic complex.

Its subcellular location is the cytoplasm. Functionally, tricorn degrades oligopeptides in a sequential manner. This chain is Tricorn protease (tri), found in Thermoplasma volcanium (strain ATCC 51530 / DSM 4299 / JCM 9571 / NBRC 15438 / GSS1).